We begin with the raw amino-acid sequence, 564 residues long: Ribulokinase (564 aa).

It belongs to the ribulokinase family.

It carries out the reaction D-ribulose + ATP = D-ribulose 5-phosphate + ADP + H(+). The enzyme catalyses L-ribulose + ATP = L-ribulose 5-phosphate + ADP + H(+). It participates in carbohydrate degradation; L-arabinose degradation via L-ribulose; D-xylulose 5-phosphate from L-arabinose (bacterial route): step 2/3. This is Ribulokinase from Geobacillus thermodenitrificans (strain NG80-2).